We begin with the raw amino-acid sequence, 203 residues long: Mitotic spindle assembly checkpoint protein MAD2A (203 aa).

The 183-residue stretch at 14–196 folds into the HORMA domain; that stretch reads KGSTEIVTEF…TTIHKVESMV (183 aa). Positions 194-203 are required for assuming the closed conformation and for interaction with cdc20; sequence SMVAYKISND.

It belongs to the MAD2 family. In terms of assembly, interacts with cdc20.

It localises to the nucleus. Its subcellular location is the chromosome. It is found in the centromere. The protein localises to the kinetochore. The protein resides in the cytoplasm. Its function is as follows. Component of the spindle-assembly checkpoint that prevents the onset of anaphase until all chromosomes are properly aligned at the metaphase plate. Required for the execution of the mitotic checkpoint which monitors the process of kinetochore-spindle attachment and inhibits the activity of the anaphase promoting complex until all chromosomes are aligned at the metaphase plate. The chain is Mitotic spindle assembly checkpoint protein MAD2A (mad2l1-1) from Dictyostelium discoideum (Social amoeba).